Here is a 1163-residue protein sequence, read N- to C-terminus: Pesticidal crystal protein Cry26Aa (1163 aa).

This sequence belongs to the delta endotoxin family.

Functionally, promotes colloidosmotic lysis by binding to the midgut epithelial cells of insects. This Bacillus thuringiensis subsp. finitimus protein is Pesticidal crystal protein Cry26Aa (cry26Aa).